Reading from the N-terminus, the 68-residue chain is MNNKGCIKCGSTEAGQKEIATTGTGLSKLFDVQHNRFLVVYCKNCGYSEFYNKESSTAGNILDLFFGG.

This is an uncharacterized protein from Bacillus subtilis (strain 168).